The following is a 462-amino-acid chain: MRIPVDTSTSRRFTPPSTTLSPGKMSEPIPLNIADSSAALVGKLRSTDRNMVEVLSDHPGELVRTDSPNFLCSVLPTHWRCNKTLPIAFKVVALGEVPDGTLVTVMAGNDENYSAELRNATAAMKSQVARFNDLRFVGRSGRGKSFTLTITVFTNPPQVATYHRAIKITVDGPREPRRHRQKLDEQTKPGNLSFSERLSELEHFRRTAMRVSPHHPNPMPNPRATLNHSAAFNPQPQGQIQVADTRQVQASPPWSYDQSYQYLGSIATQSVHPATPISPGRASSMTSLSAELSSRLSGASDLTAFSDPRVGIDRQFSTLPSISDPRMHYPGAFTYTPTPVTSGIGIGMSAMTSATRYHTYLPPPYPGSSQAQSNPFQTSSPSYHLYYGTSAGSYHQFSMMSGGERSPPRILPPCTNASTGSTLLNPNLPNQSDVVEAEGSHSNSPTNMGSTPRLEEAVWRPY.

The interval 1 to 27 is disordered; that stretch reads MRIPVDTSTSRRFTPPSTTLSPGKMSE. Positions 7-22 are enriched in low complexity; it reads TSTSRRFTPPSTTLSP. One can recognise a Runt domain in the interval 50 to 178; that stretch reads NMVEVLSDHP…TVDGPREPRR (129 aa). The interval 80–84 is interaction with DNA; that stretch reads RCNKT. The chloride site is built by Asn-112, Glu-116, Arg-139, and Val-170. 2 interaction with DNA regions span residues 135–143 and 168–177; these read RFVGRSGRG and ITVDGPREPR. The segment at 399–462 is disordered; the sequence is MMSGGERSPP…RLEEAVWRPY (64 aa). Polar residues-rich tracts occupy residues 415–433 and 440–450; these read TNAS…NQSD and SHSNSPTNMGS. A compositionally biased stretch (basic and acidic residues) spans 453–462; it reads RLEEAVWRPY.

Heterodimer with cbfb. runx1 binds DNA as a monomer and through the Runt domain. DNA-binding is increased by heterodimerization. Shows a complex and dynamic expression pattern. In stage 14-24 embryos, expressed in a subset of neuroblasts in the lateral stripe of the neural plate. In late neurula stages, expression begins in the olfactory placodes. Also expressed in structures that play a role in blood formation: at stage 14, expressed on the anterior ventral side of the embryo in the anterior endomesoderm. As the embryo elongates, expression shifts gradually to a V-shaped expression pattern in the presumptive ventral blood island.

The protein localises to the nucleus. In terms of biological role, involved in primitive hematopoiesis in the embryo. This Xenopus laevis (African clawed frog) protein is Runt-related transcription factor 1.